A 93-amino-acid polypeptide reads, in one-letter code: Consomatin G1 (93 aa).

An N-terminal signal peptide occupies residues 1–22 (MQTAYWVMLMMMVCITAPLPEG). The propeptide occupies 23 to 69 (GKPNSGIRGLVPNDLTPQHTLRSLISRRQTDVLLDATLLTTPAPEQR). An intrachain disulfide couples C72 to C77. Residue W74 is modified to D-tryptophan. A propeptide spanning residues 79–93 (PRPYPWRRRDLNGKR) is cleaved from the precursor.

The protein belongs to the conotoxin C superfamily. Consomatin family. As to expression, expressed by the venom duct.

It is found in the secreted. Its function is as follows. Potently activates human somatostatin receptors (SSTR) with a specific activation of SSTR2 (EC(50)=2.6 nM). This is Consomatin G1 from Conus geographus (Geography cone).